The chain runs to 326 residues: Transposase InsH for insertion sequence element IS5Y (326 aa).

This sequence belongs to the transposase 11 family.

In terms of biological role, involved in the transposition of the insertion sequence IS5. In Escherichia coli (strain K12), this protein is Transposase InsH for insertion sequence element IS5Y (insH5).